Reading from the N-terminus, the 977-residue chain is Monofunctional C1-tetrahydrofolate synthase, mitochondrial (977 aa).

The transit peptide at 1 to 31 (MSVRLPLLLRQLGRQQLPSGPACRLRELCRS) directs the protein to the mitochondrion. The interval 29–71 (CRSGSRSSSSGGGDPEGLRGRRLQDGQTFSSHGPGNPEAPGMD) is disordered. Residues 32–347 (GSRSSSSGGG…REQQHRRWRL (316 aa)) form a methylenetetrahydrofolate dehydrogenase and cyclohydrolase region. Lys188 bears the N6-acetyllysine; alternate mark. Lys188 carries the N6-succinyllysine; alternate modification. The interval 348-977 (HCLKLQPLSP…TETEQVKGLF (630 aa)) is formyltetrahydrofolate synthetase. A Phosphoserine modification is found at Ser356. 422-429 (TPLGEGKS) lines the ATP pocket. Lys595 is subject to N6-succinyllysine.

It in the N-terminal section; belongs to the tetrahydrofolate dehydrogenase/cyclohydrolase family. The protein in the C-terminal section; belongs to the formate--tetrahydrofolate ligase family. Homodimer.

The protein localises to the mitochondrion. The enzyme catalyses (6S)-5,6,7,8-tetrahydrofolate + formate + ATP = (6R)-10-formyltetrahydrofolate + ADP + phosphate. It functions in the pathway one-carbon metabolism; tetrahydrofolate interconversion. Its function is as follows. May provide the missing metabolic reaction required to link the mitochondria and the cytoplasm in the mammalian model of one-carbon folate metabolism complementing thus the enzymatic activities of MTHFD2. In Mus musculus (Mouse), this protein is Monofunctional C1-tetrahydrofolate synthase, mitochondrial (Mthfd1l).